Consider the following 335-residue polypeptide: tRNA N6-adenosine threonylcarbamoyltransferase (335 aa).

Residues His-109, His-113, and Tyr-130 each contribute to the a divalent metal cation site. Substrate is bound by residues Tyr-130–Gly-134, Asp-162, Gly-177, Glu-181, and Asn-266. Asp-294 contributes to the a divalent metal cation binding site.

The protein belongs to the KAE1 / TsaD family. As to quaternary structure, component of the EKC/KEOPS complex composed of at least tp53rk, tprkb, osgep and lage3; the whole complex dimerizes. A divalent metal cation is required as a cofactor.

Its subcellular location is the cytoplasm. It is found in the nucleus. The enzyme catalyses L-threonylcarbamoyladenylate + adenosine(37) in tRNA = N(6)-L-threonylcarbamoyladenosine(37) in tRNA + AMP + H(+). In terms of biological role, component of the EKC/KEOPS complex that is required for the formation of a threonylcarbamoyl group on adenosine at position 37 (t(6)A37) in tRNAs that read codons beginning with adenine. The complex is probably involved in the transfer of the threonylcarbamoyl moiety of threonylcarbamoyl-AMP (TC-AMP) to the N6 group of A37. OSGEP likely plays a direct catalytic role in this reaction, but requires other protein(s) of the complex to fulfill this activity. In Danio rerio (Zebrafish), this protein is tRNA N6-adenosine threonylcarbamoyltransferase.